The following is a 155-amino-acid chain: DNA-binding protein inhibitor ID-1 (155 aa).

The region spanning 53–105 (LPALLDEQQVNVLLYDMNGCYSRLKELVPTLPQNRKVSKVEILQHVIDYIRDL) is the bHLH domain. A Nuclear export signal motif is present at residues 98-111 (VIDYIRDLQLELNS).

In terms of assembly, heterodimer with other HLH proteins. Interacts with COPS5, IFI204, GATA4 and NKX2-5. Interacts with CLOCK and BMAL1.

The protein localises to the cytoplasm. It is found in the nucleus. In terms of biological role, transcriptional regulator (lacking a basic DNA binding domain) which negatively regulates the basic helix-loop-helix (bHLH) transcription factors by forming heterodimers and inhibiting their DNA binding and transcriptional activity. Implicated in regulating a variety of cellular processes, including cellular growth, senescence, differentiation, apoptosis, angiogenesis, and neoplastic transformation. Inhibits skeletal muscle and cardiac myocyte differentiation. Regulates the circadian clock by repressing the transcriptional activator activity of the CLOCK-BMAL1 heterodimer. In Homo sapiens (Human), this protein is DNA-binding protein inhibitor ID-1 (ID1).